A 212-amino-acid chain; its full sequence is MAMKSVAVLTKGMFGRIPAQLAVSSVPSNTIQKRSNYKFVGMPNETDGTLAGDLNYGLHNVFFTELFRGFGVMLGHVFMEPATINYPFEKGPLSSRFRGEHALRRYPSGEERCIACKLCEAICPAQAITIEAETRPDGSRRTTRYDIDMTKCIYCGLCQEACPVDAIVEGPNFEYSTETHEELLYNKEKLLLNGDRWEPELASNLQAEYLYR.

2 4Fe-4S ferredoxin-type domains span residues 104–133 (RRYPSGEERCIACKLCEAICPAQAITIEAE) and 143–172 (TRYDIDMTKCIYCGLCQEACPVDAIVEGPN). [4Fe-4S] cluster is bound by residues Cys113, Cys116, Cys119, Cys123, Cys152, Cys155, Cys158, and Cys162.

The protein belongs to the complex I 23 kDa subunit family. In terms of assembly, complex I is composed of 45 different subunits This is a component of the iron-sulfur (IP) fragment of the enzyme. It depends on [4Fe-4S] cluster as a cofactor.

The protein localises to the mitochondrion. The catalysed reaction is a ubiquinone + NADH + 5 H(+)(in) = a ubiquinol + NAD(+) + 4 H(+)(out). In terms of biological role, core subunit of the mitochondrial membrane respiratory chain NADH dehydrogenase (Complex I) that is believed to belong to the minimal assembly required for catalysis. Complex I functions in the transfer of electrons from NADH to the respiratory chain. The immediate electron acceptor for the enzyme is believed to be ubiquinone. This is Probable NADH dehydrogenase [ubiquinone] iron-sulfur protein 8, mitochondrial from Caenorhabditis elegans.